Consider the following 201-residue polypeptide: ATP-dependent Clp protease proteolytic subunit (201 aa).

S98 (nucleophile) is an active-site residue. The active site involves H123.

It belongs to the peptidase S14 family. As to quaternary structure, fourteen ClpP subunits assemble into 2 heptameric rings which stack back to back to give a disk-like structure with a central cavity, resembling the structure of eukaryotic proteasomes.

The protein resides in the cytoplasm. The catalysed reaction is Hydrolysis of proteins to small peptides in the presence of ATP and magnesium. alpha-casein is the usual test substrate. In the absence of ATP, only oligopeptides shorter than five residues are hydrolyzed (such as succinyl-Leu-Tyr-|-NHMec, and Leu-Tyr-Leu-|-Tyr-Trp, in which cleavage of the -Tyr-|-Leu- and -Tyr-|-Trp bonds also occurs).. Functionally, cleaves peptides in various proteins in a process that requires ATP hydrolysis. Has a chymotrypsin-like activity. Plays a major role in the degradation of misfolded proteins. This is ATP-dependent Clp protease proteolytic subunit from Rickettsia typhi (strain ATCC VR-144 / Wilmington).